We begin with the raw amino-acid sequence, 72 residues long: UPF0154 protein BH2350 (72 aa).

A helical transmembrane segment spans residues 3–23 (WMILLWITLGIVIGIAIGFFI).

This sequence belongs to the UPF0154 family.

The protein resides in the membrane. The polypeptide is UPF0154 protein BH2350 (Halalkalibacterium halodurans (strain ATCC BAA-125 / DSM 18197 / FERM 7344 / JCM 9153 / C-125) (Bacillus halodurans)).